The following is a 102-amino-acid chain: Large ribosomal subunit protein bL21 (102 aa).

Positions 77 to 88 (KPKKHTHTKQGH) are enriched in basic residues. The segment at 77-102 (KPKKHTHTKQGHRQPYTKVTINKINA) is disordered. Residues 93-102 (TKVTINKINA) are compositionally biased toward polar residues.

It belongs to the bacterial ribosomal protein bL21 family. In terms of assembly, part of the 50S ribosomal subunit. Contacts protein L20.

In terms of biological role, this protein binds to 23S rRNA in the presence of protein L20. The polypeptide is Large ribosomal subunit protein bL21 (Limosilactobacillus reuteri (strain DSM 20016) (Lactobacillus reuteri)).